An 85-amino-acid polypeptide reads, in one-letter code: UPF0298 protein SUB0431 (85 aa).

Belongs to the UPF0298 family.

Its subcellular location is the cytoplasm. This is UPF0298 protein SUB0431 from Streptococcus uberis (strain ATCC BAA-854 / 0140J).